Consider the following 275-residue polypeptide: Acetyl-coenzyme A carboxylase carboxyl transferase subunit beta (275 aa).

The 255-residue stretch at 21–275 (GLWIKCQCGA…IKIIGMHQAG (255 aa)) folds into the CoA carboxyltransferase N-terminal domain. Zn(2+) is bound by residues cysteine 26, cysteine 28, cysteine 44, and cysteine 47. Residues 26–47 (CQCGAILFAKDLERNLKVCQKC) form a C4-type zinc finger.

This sequence belongs to the AccD/PCCB family. In terms of assembly, acetyl-CoA carboxylase is a heterohexamer composed of biotin carboxyl carrier protein (AccB), biotin carboxylase (AccC) and two subunits each of ACCase subunit alpha (AccA) and ACCase subunit beta (AccD). It depends on Zn(2+) as a cofactor.

It is found in the cytoplasm. It carries out the reaction N(6)-carboxybiotinyl-L-lysyl-[protein] + acetyl-CoA = N(6)-biotinyl-L-lysyl-[protein] + malonyl-CoA. It participates in lipid metabolism; malonyl-CoA biosynthesis; malonyl-CoA from acetyl-CoA: step 1/1. Functionally, component of the acetyl coenzyme A carboxylase (ACC) complex. Biotin carboxylase (BC) catalyzes the carboxylation of biotin on its carrier protein (BCCP) and then the CO(2) group is transferred by the transcarboxylase to acetyl-CoA to form malonyl-CoA. The sequence is that of Acetyl-coenzyme A carboxylase carboxyl transferase subunit beta from Desulforudis audaxviator (strain MP104C).